The primary structure comprises 229 residues: MSQPRPLLSPPETEEQLLAQAQQLSGYTLGELAALDGLVTPENLKRDKGWIGVLLEIWLGASAGSKPEQDFAALGVELKTIPVDSLGRPLETTFVCVARLTGNSGVTWETSHVRHKLKRVLWIPVEGERSIPLAQRRVGSPLLWSPNEEEDRQLREDWEELMDMIVLGQVERITARHGEYLQIRPKAANAKALTEAIGARGERILTLPRGFYLKKNFTSALLARHSLIQ.

This sequence belongs to the MutH family.

The protein resides in the cytoplasm. Functionally, sequence-specific endonuclease that cleaves unmethylated GATC sequences. It is involved in DNA mismatch repair. The chain is DNA mismatch repair protein MutH from Shigella flexneri.